We begin with the raw amino-acid sequence, 221 residues long: Ependymin-2 (221 aa).

Positions methionine 1–alanine 21 are cleaved as a signal peptide. 3 N-linked (GlcNAc...) asparagine glycosylation sites follow: asparagine 33, asparagine 73, and asparagine 97.

Belongs to the ependymin family. Post-translationally, binds calcium through the terminal sialic acids. In terms of tissue distribution, EPDs are synthesized in the meninx and secreted in the cerebrospinal fluid.

The protein localises to the secreted. In terms of biological role, may play a role in neural plasticity. May be involved during axon regeneration. This chain is Ependymin-2 (epd2), found in Oncorhynchus mykiss (Rainbow trout).